We begin with the raw amino-acid sequence, 289 residues long: Ferri-bacillibactin esterase BesA (289 aa).

Residues S163, E225, and H263 each act as charge relay system in the active site.

This sequence belongs to the esterase D family.

It is found in the cytoplasm. Catalyzes the hydrolysis of the trilactone cycle of ferri-bacillibactin (ferri-BB) complex, leading to the formation of bacillibactin monomers and to cytosolic iron release, thus making iron available for metabolic use. Can also hydrolyze bacillibactin (BB), however the catalytic efficiency for ferri-BB hydrolysis is much higher than for BB. The chain is Ferri-bacillibactin esterase BesA (besA) from Bacillus subtilis (strain 168).